The sequence spans 150 residues: Galactose-binding lectin (150 aa).

Residues His-16 and Gly-19 each contribute to the D-galactose site. N-linked (GlcNAc...) asparagine glycosylation occurs at Asn-26. D-galactose contacts are provided by residues Asn-27, Asp-35–His-37, His-64, and Gly-67. Asn-74 carries N-linked (GlcNAc...) asparagine glycosylation. D-galactose is bound by residues Glu-75, Asp-83 to His-85, His-108, and Gly-111. N-linked (GlcNAc...) asparagine glycosylation is present at Asn-118. Residues Asn-119 and Asp-127–His-129 each bind D-galactose.

Monomer in solution. Homodimer in solution. Exists as a monomer in solution when a low concentration (0.001 mg/ml) of it is present. Homodimers start to appear at a concentration of 0.01 mg/ml and tetramers at a concentration of 0.1 mg/ml. Highly expressed in mantle and to a lesser extent in muscle, hepatopancreas, gill and hemocytes.

Bacterial binding activity is inhibited by D-galactose. Hemagglutinating activity is independent of divalent cations Ca2(+) or Mg2(+). It is strongly inhibited by N-acetyl-D-galactosamine (GalNAc), D-galactose and D-talose, and to a lesser extent by melibiose and raffinose. Also inhibited by glycoprotein asialo-bovine submaxillary mucin (BSM). Not inhibited by D-glucose, D-fucose, D-galactitol, N-acetyl-D-glucosamine or lactose. Fungal binding activity is inhibited by D-galactose. Cytotoxic activity against Raji cell line is completely inhibited by galactose, melibiose and raffinose, but not by glucose or lactose. Galactose inhibits binding to laminin and BSM, but not to collagen, gelatin or fibronectin. Its function is as follows. Galactose-binding lectin. Binds both alpha and beta anomer of galactose (Gal), but has a stronger interaction with the glycans having alpha Gal at the non-reducing end and binds beta Gal weakly only in highly branched glycans. Has high affinity to Galalpha1-4Galbeta1-4GlcNAc. Binds N-acetyl-2-deoxy-2-amino-galactose (2-deoxy-GalNAc). Binds N-acetylgalactosamine (GalNAc). Binds porcine stomach mucin (PSM) with high affinity. Binds galactosamine. Binds laminin, bovine submaxillary mucin (BSM), fibronectin, type I collagen and gelatin with a decreasing affinity, respectively. Has hemagglutinating activity towards human type A erythrocytes. Also hemagglutinates human type 0, B and AB erythrocytes as well as rabbit and mouse erythrocytes. Agglutinates both Gram-positive and Gram-negative bacteria including B.subtilis ATCC 6633, S.aureus ATCC 21027 and E.coli 3254, respectively. No agglutination activity towards Gram-positive S.amurskyense CMM 3673. Has bacteriostatic activity on S.amurskyense CMM 3673, B.subtilis ATCC 6633, S.aureus ATCC 21027 and E.coli 3254. However, has no agglutination nor bacteriostatic activity on Gram-negative C.scophthalmum CIP 104199 or A.troitsensis KMM 3674. Inhibits growth of fungi from the genera Aspergillus, Penicillium, Trichoderma and st. Mycelia. Inhibits germination of spores and hyphal growth of them. Has dose-dependent cytotoxic effect on the human globotriaosylceramide (Gb3)-expressing Burkitt's lymphoma (Raji) cell line. Binds to Gb3 in these cells leading to activation of caspase-9/3 and PARP. Has dose-dependent cytotoxic effect on the Gb3-expressing human MCF-7 breast cancer cell line. No cytotoxic effect on myelogenous leukemia K562 cell line, which does not express Gb3. Activates immune responses in mice and increases cytokine production of TNF-alpha, IL-6 and MCP-1 in the serum and the peritoneal lavage of mice. Induces TNF-alpha and IL-6 secretion in mouse RAW264.7 macrophages, mouse bone marrow-derived macrophages, human THP-1 macrophages, human peripheral blood mononuclear cells (PBMCs) and human blood monocyte-derived macrophages. TNF-alpha production in macrophages could not be inhibited by GalNAc, GalN or Gal, indicating that induced cytokine production is separate from its sugar binding activity. Increases intracellular reactive oxygen species levels, expression and phosphorylation of protein kinases PKC alpha/delta, expression of COX-2 and NF-kappaB, and activates the MAPK pathway by increasing the phosphorylation of ERK1/2, JNK1/2 and p38 in mouse RAW264.7 macrophages. Induces endotoxin tolerance in lipopolysaccharide(LPS)-activated macrophages by down-regulating IRAK2 expression, reducing JNK1/2 phosphorylation and NF-kappaB activation. Can slightly increase the bactericidal activity of RAW264.7 macrophages. Has DNA-binding activity. Recognizes pathogen-associated molecular patterns (PAMPs) and binds to LPS from E.coli, but has only little binding to beta-1,3-glucan from E.gracilis and peptidoglycan from S.aureus. Activates secretion of TNF-alpha and IFN-gamma by the human peripheral blood cells (HPBCs). May be involved in innate immunity acting as an antibacterial and antifungal agent involved in the recognition and clearance of pathogens. The protein is Galactose-binding lectin of Crenomytilus grayanus (Gray mussel).